Consider the following 333-residue polypeptide: MIETLLQSPSSWTNFFIFFGLAVLLLFAVLGFVTYGILAERKVMGFMQGRIGPNQVGGRFGLLQTVADVLKLLLKEDSIPKAADKPLFILAPVIAFAPAFMVLAVIPFTDKFQFADIGVGLLYYIAVSGITTIGVVTGGWASNNKYSLLGGMRAAAQMISYEIPLVMSVIGIVLLAGSLNLNEIVAAQENVWYIFVQPVGFVVFLIAAVAELNRTPFDLPEAESELVSGYHTEYSGFRWAFFMLSEYVYFFGMASLITVLFLGGWNPVMFLGFIPGAVWFALKFSSVVFLLIWFRVTFPRIRGDQLMEFGWKVLLPIALANIFLTALIKELFF.

The next 8 helical transmembrane spans lie at 15–35 (FFIFFGLAVLLLFAVLGFVTY), 88–108 (FILAPVIAFAPAFMVLAVIPF), 117–137 (IGVGLLYYIAVSGITTIGVVT), 159–179 (ISYEIPLVMSVIGIVLLAGSL), 191–211 (VWYIFVQPVGFVVFLIAAVAE), 239–259 (WAFFMLSEYVYFFGMASLITV), 274–296 (IPGAVWFALKFSSVVFLLIWFRV), and 313–333 (VLLPIALANIFLTALIKELFF).

It belongs to the complex I subunit 1 family. In terms of assembly, NDH-1 is composed of 14 different subunits. Subunits NuoA, H, J, K, L, M, N constitute the membrane sector of the complex.

Its subcellular location is the cell membrane. It catalyses the reaction a quinone + NADH + 5 H(+)(in) = a quinol + NAD(+) + 4 H(+)(out). NDH-1 shuttles electrons from NADH, via FMN and iron-sulfur (Fe-S) centers, to quinones in the respiratory chain. The immediate electron acceptor for the enzyme in this species is believed to be ubiquinone. Couples the redox reaction to proton translocation (for every two electrons transferred, four hydrogen ions are translocated across the cytoplasmic membrane), and thus conserves the redox energy in a proton gradient. This subunit may bind ubiquinone. The chain is NADH-quinone oxidoreductase subunit H from Bacillus thuringiensis subsp. konkukian (strain 97-27).